Consider the following 680-residue polypeptide: Forkhead box protein P4 (680 aa).

The segment covering 1-17 (MMVESASETIRSAPSGQ) has biased composition (polar residues). The disordered stretch occupies residues 1-56 (MMVESASETIRSAPSGQNGVGSLSGQADGSSGGATGTTASGTGREVTTGADSNGEM). Phosphoserine occurs at positions 52 and 86. Glycyl lysine isopeptide (Lys-Gly) (interchain with G-Cter in SUMO2) cross-links involve residues K175 and K246. The interval 262-306 (FAAPPKVSPPLSHHTLPNGQPTVLTSRRDSSSHEETPGSHPLYGH) is disordered. Over residues 276–286 (TLPNGQPTVLT) the composition is skewed to polar residues. Residues 287–298 (SRRDSSSHEETP) show a composition bias toward basic and acidic residues. Residues 307–332 (GECKWPGCETLCEDLGQFIKHLNTEH) form a C2H2-type zinc finger. A leucine-zipper region spans residues 349–370 (VQQLEIQLAKESERLQAMMAHL). K378 is covalently cross-linked (Glycyl lysine isopeptide (Lys-Gly) (interchain with G-Cter in SUMO2)). A disordered region spans residues 407–445 (GLVHPPTSAAAPVTPLRPPGLGSASLHGGGPARRRSSDK). A DNA-binding region (fork-head) is located at residues 467–559 (RPPFTYASLI…KMTGSPTLVK (93 aa)). Position 554 is a phosphoserine (S554). The segment at 602-680 (PLSHDDVGAP…EEELPGEELS (79 aa)) is disordered. Positions 617-635 (SNGSSSPPRLSPPQYSHQV) are enriched in polar residues. Acidic residues predominate over residues 668–680 (RDLEEELPGEELS).

As to quaternary structure, forms homodimers and heterodimers with FOXP1 and FOXP2. Dimerization is required for DNA-binding.

It localises to the nucleus. Its function is as follows. Transcriptional repressor that represses lung-specific expression. This is Forkhead box protein P4 (FOXP4) from Homo sapiens (Human).